Consider the following 224-residue polypeptide: MKLEYNRIIDSTLLKADTLPHEIDALCADAHKYQFYAVCVNPSYVRYAKNILKGTGVKLCTVVGFPLGQTTQRQKVYETKIAIKEGADEIDMVMNIAEFKKRCACVISEIRAVKKVCGKRTLKVIIETALLNQDEIRDAVNVCIDGNADFVKTSTGFSMRGASLEDITIMREASGNLIKIKASGGVQTAQQFLDFFNAGVSRIGTSNAVKIMEELHKLESHEHR.

Asp91 serves as the catalytic Proton donor/acceptor. Lys152 (schiff-base intermediate with acetaldehyde) is an active-site residue. Lys181 functions as the Proton donor/acceptor in the catalytic mechanism.

It belongs to the DeoC/FbaB aldolase family. DeoC type 1 subfamily.

The protein resides in the cytoplasm. It catalyses the reaction 2-deoxy-D-ribose 5-phosphate = D-glyceraldehyde 3-phosphate + acetaldehyde. The protein operates within carbohydrate degradation; 2-deoxy-D-ribose 1-phosphate degradation; D-glyceraldehyde 3-phosphate and acetaldehyde from 2-deoxy-alpha-D-ribose 1-phosphate: step 2/2. Functionally, catalyzes a reversible aldol reaction between acetaldehyde and D-glyceraldehyde 3-phosphate to generate 2-deoxy-D-ribose 5-phosphate. This Mycoplasma pneumoniae (strain ATCC 29342 / M129 / Subtype 1) (Mycoplasmoides pneumoniae) protein is Deoxyribose-phosphate aldolase.